We begin with the raw amino-acid sequence, 245 residues long: Chromosome partition protein MukE (245 aa).

Residues 213–245 form a disordered region; the sequence is PESIAAEKATADDESAVSNEEDFEYDDNQEGAE. Acidic residues predominate over residues 224–245; sequence DDESAVSNEEDFEYDDNQEGAE.

The protein belongs to the MukE family. As to quaternary structure, interacts, and probably forms a ternary complex, with MukF and MukB. The complex formation is stimulated by calcium or magnesium.

Its subcellular location is the cytoplasm. The protein localises to the nucleoid. Its function is as follows. Involved in chromosome condensation, segregation and cell cycle progression. May participate in facilitating chromosome segregation by condensation DNA from both sides of a centrally located replisome during cell division. Probably acts via its interaction with MukB and MukF. The sequence is that of Chromosome partition protein MukE from Actinobacillus succinogenes (strain ATCC 55618 / DSM 22257 / CCUG 43843 / 130Z).